A 201-amino-acid polypeptide reads, in one-letter code: Small ribosomal subunit protein uS4 (201 aa).

The 61-residue stretch at 93–153 (ARLDNVVYRM…EKSKSLEAID (61 aa)) folds into the S4 RNA-binding domain.

It belongs to the universal ribosomal protein uS4 family. In terms of assembly, part of the 30S ribosomal subunit. Contacts protein S5. The interaction surface between S4 and S5 is involved in control of translational fidelity.

In terms of biological role, one of the primary rRNA binding proteins, it binds directly to 16S rRNA where it nucleates assembly of the body of the 30S subunit. Functionally, with S5 and S12 plays an important role in translational accuracy. The protein is Small ribosomal subunit protein uS4 of Flavobacterium psychrophilum (strain ATCC 49511 / DSM 21280 / CIP 103535 / JIP02/86).